A 270-amino-acid chain; its full sequence is Hydroxyethylthiazole kinase (270 aa).

Substrate is bound at residue Met44. The ATP site is built by Arg119 and Thr165. Gly192 provides a ligand contact to substrate.

This sequence belongs to the Thz kinase family. It depends on Mg(2+) as a cofactor.

It catalyses the reaction 5-(2-hydroxyethyl)-4-methylthiazole + ATP = 4-methyl-5-(2-phosphooxyethyl)-thiazole + ADP + H(+). It participates in cofactor biosynthesis; thiamine diphosphate biosynthesis; 4-methyl-5-(2-phosphoethyl)-thiazole from 5-(2-hydroxyethyl)-4-methylthiazole: step 1/1. Catalyzes the phosphorylation of the hydroxyl group of 4-methyl-5-beta-hydroxyethylthiazole (THZ). In Corynebacterium efficiens (strain DSM 44549 / YS-314 / AJ 12310 / JCM 11189 / NBRC 100395), this protein is Hydroxyethylthiazole kinase.